The sequence spans 345 residues: DNA-directed RNA polymerase subunit alpha (345 aa).

The alpha N-terminal domain (alpha-NTD) stretch occupies residues 1-233; sequence MVRNWCSLIR…KQLQVFVGLH (233 aa). Positions 256–345 are alpha C-terminal domain (alpha-CTD); sequence LNDILLRHVE…EEMGEIQEEG (90 aa).

This sequence belongs to the RNA polymerase alpha chain family. As to quaternary structure, homodimer. The RNAP catalytic core consists of 2 alpha, 1 beta, 1 beta' and 1 omega subunit. When a sigma factor is associated with the core the holoenzyme is formed, which can initiate transcription.

It carries out the reaction RNA(n) + a ribonucleoside 5'-triphosphate = RNA(n+1) + diphosphate. In terms of biological role, DNA-dependent RNA polymerase catalyzes the transcription of DNA into RNA using the four ribonucleoside triphosphates as substrates. This Syntrophus aciditrophicus (strain SB) protein is DNA-directed RNA polymerase subunit alpha.